Here is a 334-residue protein sequence, read N- to C-terminus: ADP-L-glycero-D-manno-heptose-6-epimerase (334 aa).

Residues 11 to 12 (FI), 32 to 33 (DN), lysine 39, lysine 54, 77 to 81 (QGACS), and asparagine 94 each bind NADP(+). Catalysis depends on tyrosine 141, which acts as the Proton acceptor. Lysine 145 is an NADP(+) binding site. Asparagine 171 is a binding site for substrate. Positions 172 and 180 each coordinate NADP(+). The active-site Proton acceptor is lysine 180. Substrate is bound by residues arginine 182, histidine 189, 203-206 (FGSN), arginine 216, and tyrosine 295.

Belongs to the NAD(P)-dependent epimerase/dehydratase family. HldD subfamily. In terms of assembly, homopentamer. Requires NADP(+) as cofactor.

The enzyme catalyses ADP-D-glycero-beta-D-manno-heptose = ADP-L-glycero-beta-D-manno-heptose. Its pathway is nucleotide-sugar biosynthesis; ADP-L-glycero-beta-D-manno-heptose biosynthesis; ADP-L-glycero-beta-D-manno-heptose from D-glycero-beta-D-manno-heptose 7-phosphate: step 4/4. The protein operates within bacterial outer membrane biogenesis; LOS core biosynthesis. Catalyzes the interconversion between ADP-D-glycero-beta-D-manno-heptose and ADP-L-glycero-beta-D-manno-heptose via an epimerization at carbon 6 of the heptose. This chain is ADP-L-glycero-D-manno-heptose-6-epimerase, found in Neisseria meningitidis serogroup A / serotype 4A (strain DSM 15465 / Z2491).